A 360-amino-acid chain; its full sequence is Alkanal monooxygenase alpha chain (360 aa).

The protein belongs to the bacterial luciferase oxidoreductase family. In terms of assembly, heterodimer of an alpha and a beta chain.

The enzyme catalyses a long-chain fatty aldehyde + FMNH2 + O2 = a long-chain fatty acid + hnu + FMN + H2O + 2 H(+). Light-emitting reaction in luminous bacteria. The polypeptide is Alkanal monooxygenase alpha chain (luxA) (Photorhabdus luminescens (Xenorhabdus luminescens)).